Consider the following 237-residue polypeptide: B3 domain-containing protein At1g20600 (237 aa).

Residues 53–79 (LVSQANQKQSRKREEKTEKNQPKRVKN) are disordered. The segment covering 64 to 73 (KREEKTEKNQ) has biased composition (basic and acidic residues). The segment at residues 126–230 (KKQLMSSDVD…LEHVFIRGSK (105 aa)) is a DNA-binding region (TF-B3).

The protein resides in the nucleus. In Arabidopsis thaliana (Mouse-ear cress), this protein is B3 domain-containing protein At1g20600.